The chain runs to 203 residues: Endo-type membrane-bound lytic murein transglycosylase A (203 aa).

The N-terminal stretch at 1–15 (MKLRWFAFLIVLLAG) is a signal peptide. Cys16 carries N-palmitoyl cysteine lipidation. Cys16 carries the S-diacylglycerol cysteine lipid modification.

The protein belongs to the transglycosylase Slt family.

The protein resides in the cell outer membrane. The catalysed reaction is Endolytic cleavage of the (1-&gt;4)-beta-glycosidic linkage between N-acetylmuramic acid (MurNAc) and N-acetylglucosamine (GlcNAc) residues in peptidoglycan with concomitant formation of a 1,6-anhydrobond in the MurNAc residue.. Murein-degrading enzyme. May play a role in recycling of muropeptides during cell elongation and/or cell division. Preferentially cleaves at a distance of more than two disaccharide units from the ends of the glycan chain. This chain is Endo-type membrane-bound lytic murein transglycosylase A, found in Shigella dysenteriae serotype 1 (strain Sd197).